A 253-amino-acid chain; its full sequence is Isopentenyl-diphosphate delta-isomerase IDI1 (253 aa).

Lys-61 contacts substrate. 2 residues coordinate Mg(2+): His-65 and His-76. The Nudix hydrolase domain occupies 74-224 (LLHRAFSVFL…SLVFTPWFKL (151 aa)). Residues Gln-94 and Lys-99 each contribute to the substrate site. The active site involves Cys-111. Ser-112 is a substrate binding site. The Nudix box motif lies at 112-145 (SHPLHIPTETGSTLEDSIAGVKRAAQRKLEHELG). Glu-174 and Glu-176 together coordinate Mg(2+). Glu-176 is a catalytic residue.

The protein belongs to the IPP isomerase type 1 family. Requires Mg(2+) as cofactor.

The enzyme catalyses isopentenyl diphosphate = dimethylallyl diphosphate. The protein operates within isoprenoid biosynthesis; dimethylallyl diphosphate biosynthesis; dimethylallyl diphosphate from isopentenyl diphosphate: step 1/1. Functionally, isopentenyl-diphosphate delta-isomerase; part of the second module of ergosterol biosynthesis pathway that includes the middle steps of the pathway. IDI1 catalyzes the 1,3-allylic rearrangement of isopentenyl (IPP) to its highly electrophilic allylic isomer, dimethylallyl diphosphate (DMAPP). The second module is carried out in the vacuole and involves the formation of farnesyl diphosphate, which is also an important intermediate in the biosynthesis of ubiquinone, dolichol, heme and prenylated proteins. Activity by the mevalonate kinase ERG12 (FG05912) first converts mevalonate into 5-phosphomevalonate. 5-phosphomevalonate is then further converted to 5-diphosphomevalonate by the phosphomevalonate kinase ERG8 (FG09764). The diphosphomevalonate decarboxylase ERG19 (FG10424) then produces isopentenyl diphosphate. The isopentenyl-diphosphate delta-isomerase IDI1 (FG09722) then catalyzes the 1,3-allylic rearrangement of the homoallylic substrate isopentenyl (IPP) to its highly electrophilic allylic isomer, dimethylallyl diphosphate (DMAPP). Finally the farnesyl diphosphate synthase ERG20 (FG06784) catalyzes the sequential condensation of isopentenyl pyrophosphate with dimethylallyl pyrophosphate, and then with the resultant geranylpyrophosphate to the ultimate product farnesyl pyrophosphate. This is Isopentenyl-diphosphate delta-isomerase IDI1 from Gibberella zeae (strain ATCC MYA-4620 / CBS 123657 / FGSC 9075 / NRRL 31084 / PH-1) (Wheat head blight fungus).